The following is a 1544-amino-acid chain: Zinc finger protein GLI2 (1544 aa).

Residues 1–26 (METSAPAPALEKKEAKSGLLEDSSFP) form a disordered region. Phosphoserine is present on residues Ser-145, Ser-230, Ser-232, and Ser-238. Positions 338–364 (SSSSSNCLNDANQNKQNSESAVSSTVN) are disordered. At Ser-385 the chain carries Phosphoserine; by DYRK2. The segment at 417-444 (TNCHWADCTKEYDTQEQLVHHINNEHIH) adopts a C2H2-type 1 zinc-finger fold. The segment at 455 to 477 (QACTREQKPFKAQYMLVVHMRRH) adopts a C2H2-type 2; degenerate zinc-finger fold. C2H2-type zinc fingers lie at residues 483 to 507 (HKCT…LRSH), 513 to 538 (YVCE…NRTH), and 544 to 569 (YICK…KTVH). 2 disordered regions span residues 557-619 (DPSS…TSHT) and 635-682 (GLCQ…ALAD). The segment covering 569 to 585 (HGPDAHVTKKQRNDVHV) has biased composition (basic and acidic residues). The span at 637–657 (CQSSPGAQSSCSSEPSPLGSA) shows a compositional bias: low complexity. Residue Ser-707 is modified to Phosphoserine. Position 708 is a phosphothreonine (Thr-708). At Lys-740 the chain carries N6-acetyllysine; by EP300. Disordered stretches follow at residues 781 to 800 (SQLQ…AYTV), 805 to 861 (SGIS…PGLL), 908 to 963 (ALPG…RRPD), 995 to 1016 (VQSH…RPPS), 1166 to 1220 (FGQY…CLGM), and 1422 to 1457 (GGCP…VSST). Polar residues-rich tracts occupy residues 790 to 800 (STSTMSSAYTV) and 805 to 814 (SGISPYFSSR). Positions 954–963 (RASDPVRRPD) are enriched in basic and acidic residues. Position 997 is a phosphoserine; by DYRK2 (Ser-997). 3 stretches are compositionally biased toward polar residues: residues 997–1009 (SHPS…TRNA), 1173–1190 (NPQS…TQPH), and 1200–1209 (SRGSYTQQPR).

Belongs to the GLI C2H2-type zinc-finger protein family. In terms of assembly, interacts with ZIC1 and ZIC2. Interacts with STK36. Interacts with SUFU; this inhibits transcriptional activation mediated by GLI2. Interacts (via C-terminal internal region) with FOXC1 (via N-terminus); this interaction is direct and increases GLI2 DNA-binding and transcriptional activity through a smoothened (SMO)-independent Hedgehog (Hh) signaling pathway. In terms of processing, phosphorylated in vitro by ULK3. Phosphorylated by DYRK2; this inhibits GLI2 transcription factor activity and promotes proteasomal degradation of GLI2. Post-translationally, acetylation at Lys-740 inhibits Hh target gene expression, probably by impeding entry into chromatin thus preventing promoter occupancy.

It localises to the nucleus. It is found in the cytoplasm. The protein resides in the cell projection. The protein localises to the cilium. In terms of biological role, functions as a transcription regulator in the hedgehog (Hh) pathway. Functions as a transcriptional activator. May also function as transcriptional repressor. Requires STK36 for full transcriptional activator activity. Binds to the DNA sequence 5'-GAACCACCCA-3' which is part of the TRE-2S regulatory element. Is involved in the smoothened (SHH) signaling pathway. Required for normal skeleton development. The polypeptide is Zinc finger protein GLI2 (Mus musculus (Mouse)).